The primary structure comprises 271 residues: tRNA (guanine-N(7)-)-methyltransferase (271 aa).

The segment at 1–52 (MSDSHHTPEAASASLRHVRAKGEPRFPDGPKADPAGSHFERRIRSFQPRRSR) is disordered. A compositionally biased stretch (basic and acidic residues) spans 20–31 (AKGEPRFPDGPK). The S-adenosyl-L-methionine site is built by E93, D118, D145, and D168. D168 is a catalytic residue. Residues K172, D204, and 241–244 (TRFE) each bind substrate.

This sequence belongs to the class I-like SAM-binding methyltransferase superfamily. TrmB family.

It carries out the reaction guanosine(46) in tRNA + S-adenosyl-L-methionine = N(7)-methylguanosine(46) in tRNA + S-adenosyl-L-homocysteine. The protein operates within tRNA modification; N(7)-methylguanine-tRNA biosynthesis. In terms of biological role, catalyzes the formation of N(7)-methylguanine at position 46 (m7G46) in tRNA. The chain is tRNA (guanine-N(7)-)-methyltransferase from Streptomyces coelicolor (strain ATCC BAA-471 / A3(2) / M145).